The chain runs to 483 residues: Alginate biosynthesis protein AlgA (483 aa).

Belongs to the mannose-6-phosphate isomerase type 2 family. Monomer. The cofactor is Co(2+).

It carries out the reaction D-mannose 6-phosphate = D-fructose 6-phosphate. It catalyses the reaction alpha-D-mannose 1-phosphate + GTP + H(+) = GDP-alpha-D-mannose + diphosphate. It functions in the pathway nucleotide-sugar biosynthesis; GDP-alpha-D-mannose biosynthesis; GDP-alpha-D-mannose from alpha-D-mannose 1-phosphate (GTP route): step 1/1. Its pathway is nucleotide-sugar biosynthesis; GDP-alpha-D-mannose biosynthesis; alpha-D-mannose 1-phosphate from D-fructose 6-phosphate: step 1/2. In terms of biological role, produces a precursor for alginate polymerization. The alginate layer provides a protective barrier against host immune defenses and antibiotics. In Pseudomonas fluorescens, this protein is Alginate biosynthesis protein AlgA (algA).